The following is an 878-amino-acid chain: Lon protease 2 (878 aa).

One can recognise a Lon N-terminal domain in the interval 85–281 (LYLLPVKERP…KVLSLFKHEI (197 aa)). An ATP-binding site is contributed by 434–441 (GPPGVGKT). Positions 668-850 (NQQMGTVTGL…DDVAKLTFHI (183 aa)) constitute a Lon proteolytic domain. Residues Ser-756 and Lys-799 contribute to the active site.

Belongs to the peptidase S16 family. As to quaternary structure, homohexamer. Organized in a ring with a central cavity.

The protein localises to the cytoplasm. It carries out the reaction Hydrolysis of proteins in presence of ATP.. In terms of biological role, ATP-dependent serine protease that mediates the selective degradation of mutant and abnormal proteins as well as certain short-lived regulatory proteins. Required for cellular homeostasis and for survival from DNA damage and developmental changes induced by stress. Degrades polypeptides processively to yield small peptide fragments that are 5 to 10 amino acids long. Binds to DNA in a double-stranded, site-specific manner. The polypeptide is Lon protease 2 (Hydrogenovibrio crunogenus (strain DSM 25203 / XCL-2) (Thiomicrospira crunogena)).